The primary structure comprises 713 residues: MFGRFLLAIVILQLARTACTQEADDGKCKTCGVTIGQDTWCSECNGANYAPVNGQCVDVNAEGPSKTLCPQHSAGKCTQCGGNSFMYKDGCYSSGEGLPGHSLCLSSDGDGVCTEAAPGYFAPVGAANTEQSVIACGDTTGVTIAAGGNTYKGIADCAECSAPDATAGAEAGKVATCTKCGVSKYLKDNVCVDKAQCNSGSTNKFVAVDDSENGNKCVSCSDNLNGGVANCDTCSYDEQSKKIKCTKCTDNNYLKTTSEGTSCVQKDQCKDGFFPKDDSSAGNKCLPCNDSTDGIANCATCALVSGRSGAALVTCSACTDGYKPSADKTTCEAVSNCKTPGCKACSNEGKENEVCTDCDGSTYLTPTSQCIDSCAKIGNYYGATEGAKKLCKECTAANCKTCDDQGQCQACNDGFYKNGDACSPCHESCKTCSAGTASDCTECPTGKALRYGDDGTKGTCGEGCTTGTGAGACKTCGLTIDGASYCSECATTTEYPQNGVCAPKASRATPTCNDSPIQNGVCGTCADNYFKMNGGCYETVKYPGKTVCISAPNGGTCQKAADGYKLDSGTLTVCSEGCKECASSTDCTTCLDGYVKSASACTKCDASCETCNGAATTCKACATGYYKTASGEGACTSCESDSNGVTGIKGCLNCAPPPNNKGSVLCYLIKDSGSTNKSGLSTGAIAGISVAVIVVVGGLIGFLCWWFLCRGKA.

The first 17 residues, 1 to 17, serve as a signal peptide directing secretion; it reads MFGRFLLAIVILQLART. The Extracellular segment spans residues 18–679; it reads ACTQEADDGK…KDSGSTNKSG (662 aa). N289 and N676 each carry an N-linked (GlcNAc...) asparagine glycan. Residues 680–708 traverse the membrane as a helical segment; sequence LSTGAIAGISVAVIVVVGGLIGFLCWWFL. The Cytoplasmic segment spans residues 709–713; it reads CRGKA.

The protein belongs to the Giardia variant surface protein family.

The protein resides in the cell membrane. The sequence is that of Major surface-labeled trophozoite antigen 417 (TSA 417) from Giardia intestinalis (Giardia lamblia).